Reading from the N-terminus, the 389-residue chain is Na(+)/H(+) antiporter NhaA (389 aa).

11 helical membrane passes run 14-34 (AGGI…NSPL), 59-79 (LILW…GLEV), 95-115 (SLPT…YLLF), 124-144 (AGWA…MALL), 154-174 (VFLL…IALF), 177-197 (TDLS…LVGL), 213-233 (LILW…GVII), 257-277 (PWST…VYVG), 292-312 (IALG…YIAV), 328-348 (IAPV…IASL), and 363-383 (LGTL…LSKV).

Belongs to the NhaA Na(+)/H(+) (TC 2.A.33) antiporter family.

It is found in the cell inner membrane. It carries out the reaction Na(+)(in) + 2 H(+)(out) = Na(+)(out) + 2 H(+)(in). Its function is as follows. Na(+)/H(+) antiporter that extrudes sodium in exchange for external protons. The sequence is that of Na(+)/H(+) antiporter NhaA from Shewanella baltica (strain OS195).